The sequence spans 988 residues: Next to BRCA1 gene 1 protein (988 aa).

Residues 4–86 (QVTLNVTFKN…NQLQMQVHEG (83 aa)) form the PB1 domain. Ser117 is modified (phosphoserine). The interval 126–150 (MKTTEEPAPEQCSSAPCDTDQPQDK) is disordered. Residues 213–265 (SWHIACSHCQKRIVGVRYQCSLCPSYNICEDCEAGPYTHDTNHVLLKLRRPVV) form a ZZ-type zinc finger. Residues Cys218, Cys221, Cys232, Cys235, Cys241, Cys244, His251, and His255 each coordinate Zn(2+). ATG8 family proteins-binding regions lie at residues 543 to 637 (ASER…PASV) and 745 to 756 (ASSEDYIIILPE). Thr587 bears the Phosphothreonine mark. Phosphoserine is present on residues Ser591, Ser597, and Ser626. Positions 611–644 (ESEGAGFKAPPDSTVSAKRKAETPASVEETEEDL) are disordered. Disordered regions lie at residues 768–822 (MYSS…TSQP) and 841–900 (RSAP…HHNG). Residues 795 to 807 (TEARERLPERESQ) show a composition bias toward basic and acidic residues. Polar residues predominate over residues 808-822 (PQEQSISDILTTSQP). Position 860 is a phosphoserine (Ser860). A UBA domain is found at 935–979 (SEDQTTALMAHLFEMGFCDRQLNLRLLRKHNYNILQVVTELLQVN).

As to quaternary structure, homooligomer and heterooligomer. Interacts with TRIM55. Interacts with titin/TTN. Interacts with RNF29, USP8, MAP1LC3A, MAP1LC3B, MAP1LC3C, GABARAP, GABARAPL1 and GABARAPL2. Binds to ubiquitin and ubiquitinated proteins. Interacts with SQSTM1. Interacts with TAX1BP1. Interacts with IRF3; this interaction mediates autophagic degradation of IRF3. Interacts with IL12A and IL12B. Phosphorylated by GSK3A; this phosphorylation inhibits NBR1 involvement in the formation of ubiquitinated protein aggregates. Expressed in brain.

Its subcellular location is the cytoplasm. It localises to the cytoplasmic vesicle. It is found in the autophagosome. The protein resides in the lysosome. The protein localises to the myofibril. Its subcellular location is the sarcomere. It localises to the m line. Ubiquitin-binding autophagy adapter that participates in different processes including host defense or intracellular homeostasis. Possesses a double function during the selective autophagy by acting as a shuttle bringing ubiquitinated proteins to autophagosomes and also by participating in the formation of protein aggregates. Plays a role in the regulation of the innate immune response by modulating type I interferon production and targeting ubiquitinated IRF3 for autophagic degradation. In response to oxidative stress, promotes an increase in SQSTM1 levels, phosphorylation, and body formation by preventing its autophagic degradation. In turn, activates the KEAP1-NRF2/NFE2L2 antioxidant pathway. Also plays non-autophagy role by mediating the shuttle of IL-12 to late endosome for subsequent secretion. This Mus musculus (Mouse) protein is Next to BRCA1 gene 1 protein (Nbr1).